A 311-amino-acid polypeptide reads, in one-letter code: CAAX prenyl protease 2 (311 aa).

3 consecutive transmembrane segments (helical) span residues Val14–Ile34, Phe51–Ile71, and Val94–Phe114. The active-site Proton donor/acceptor is Glu164. The helical transmembrane segment at Ile173–Leu193 threads the bilayer. The active-site Proton donor/acceptor is the His198. Transmembrane regions (helical) follow at residues Ile219–Ile239, Leu244–Ala264, and Gly268–Leu288.

Belongs to the peptidase U48 family. Expressed in seeds, stems, leaves, flowers and siliques.

It is found in the endoplasmic reticulum membrane. The catalysed reaction is Hydrolyzes the peptide bond -P2-(S-farnesyl or geranylgeranyl)C-P1'-P2'-P3'-COOH where P1' and P2' are amino acids with aliphatic sidechains and P3' is any C-terminal residue.. Its activity is regulated as follows. Inhibited in vitro by L-1-tosylamido-2-phenylethyl chloromethyl ketone (TPCK) and N-ethylmaleimide, but not by EDTA. In terms of biological role, protease involved in the processing of a variety of prenylated proteins containing the C-terminal CAAX motif, where C is a cysteine modified with an isoprenoid lipid, A is an aliphatic amino acid and X is any C-terminal amino acid. Proteolytically removes the C-terminal three residues of farnesylated and geranylated proteins, leaving the prenylated cysteine as the new C-terminus. The substrate specificity is only partially overlapping with that of FACE1. CAAX processing is likely required for subcellular targeting of prenylated proteins to the plasma membrane. The polypeptide is CAAX prenyl protease 2 (FACE2) (Arabidopsis thaliana (Mouse-ear cress)).